The following is a 390-amino-acid chain: Protein AC109 (390 aa).

The protein localises to the host cytoplasm. The protein resides in the host nucleus. Functionally, plays a role in the transport of the budded virion (BV) to the host nucleus and for occlusion of viral progeny. This Lepidoptera (butterflies and moths) protein is Protein AC109 (ORF109).